Here is a 404-residue protein sequence, read N- to C-terminus: G2/mitotic-specific cyclin-B1 (404 aa).

It belongs to the cyclin family. Cyclin AB subfamily. As to quaternary structure, interacts with the CDK1 protein kinase to form a serine/threonine kinase holoenzyme complex also known as maturation promoting factor (MPF). The cyclin subunit imparts substrate specificity to the complex.

Essential for the control of the cell cycle at the G2/M (mitosis) transition. In Oryzias latipes (Japanese rice fish), this protein is G2/mitotic-specific cyclin-B1 (ccnb1).